Consider the following 992-residue polypeptide: MLNFFRRLLGDSNEKEIRRLQPIVEEINRLGPEFARLSDAELRAKTDEFRQRLADGETLDDILPEAFATVREAAARTIGLRHYDVQLIGGIVLHQGKIAEMKTGEGKTLVATLPLYLNALEGKGVHLVTVNDYLAKVGAGWMGPIYHFLGLSVGFIAHDQSALYDPDYIDPNANPEDQRLVHWRPCTRREAYLADITYGTNNEFGFDYLRDNMAYDKSQLVQRELHYAIVDEVDNILIDEARTPLIISGPAQKSSDLYRQMAKLVRQLRRSSVTAKQVKEEGLEPDGDFFVDERTKSIYLSEKGIEKLEKLLNIPPGESLFDPEHYEKTHYVENALKAQFIYQRDRDYMVTPNGEVVIIDEFTGRAMPGRRWSDGLHQAIEAKEGVPIKNENVTLATITFQNYFRMYKKLAGMTGTAYTEREEFAKIYNLDVVVIPTHKPMIRKDLPDQIYATEEAKFRAVLREVQEMHEIGRPVLIGTTSVETSERLSAMLKQAGIPHNVLNAKHHEREAAIVAQAGRKGAVTVATNMAGRGTDILLGGNPDGLVEEFLRKEGLTLETATPEQKRAAWEKAKALTEAEGEEVRQLGGLHVIGTERHEARRIDNQLRGRAGRQGDPGSSRFFLSLEDELLRRFGPVERIKGLMERFVDSDVPLQAGLLDRTIESAQTRVEGYNFDIRKHTVEFDDVMNKQRQIIYADRKAILDEADMRERVLDLMAEEIQRQIDEHLSDGVDEFGLTELLRVYRRIDPTLPATVTAETLKGKTKEEIEQFLLDHLETTYAEREKAIGPEVMRTVERRVMLGAIDRQWVDYLTAMDELRQNILLQAYAQKDPLVEFKRESFRMFDELKANIAHDIVYNIIPASFQYEAYLRQIAEEQARRLATAQIAGGSSEVEQTRKPQRRTVQQIGRNDPCPCGSGKKFKHCHLGREHELAAFMNNAPATTPKVEPQPVKPAIAEEAAKIKAAIDNGTLPAASPKTPRGRQPQAVPRGKKR.

Residues Gln86, 104–108 (GEGKT), and Asp535 contribute to the ATP site. Residues 885-910 (IAGGSSEVEQTRKPQRRTVQQIGRND) form a disordered region. Zn(2+) is bound by residues Cys912, Cys914, Cys923, and His924. The tract at residues 965-992 (IDNGTLPAASPKTPRGRQPQAVPRGKKR) is disordered.

The protein belongs to the SecA family. As to quaternary structure, monomer and homodimer. Part of the essential Sec protein translocation apparatus which comprises SecA, SecYEG and auxiliary proteins SecDF. Other proteins may also be involved. Zn(2+) serves as cofactor.

Its subcellular location is the cell membrane. The protein localises to the cytoplasm. The catalysed reaction is ATP + H2O + cellular proteinSide 1 = ADP + phosphate + cellular proteinSide 2.. In terms of biological role, part of the Sec protein translocase complex. Interacts with the SecYEG preprotein conducting channel. Has a central role in coupling the hydrolysis of ATP to the transfer of proteins into and across the cell membrane, serving as an ATP-driven molecular motor driving the stepwise translocation of polypeptide chains across the membrane. The chain is Protein translocase subunit SecA from Chloroflexus aggregans (strain MD-66 / DSM 9485).